A 130-amino-acid chain; its full sequence is uncharacterized protein (130 aa).

This is an uncharacterized protein from Aedes vexans (Inland floodwater mosquito).